The chain runs to 474 residues: Trigger factor (474 aa).

The 88-residue stretch at 174-261 (GDIAVVSFKG…LKDLKEKELP (88 aa)) folds into the PPIase FKBP-type domain. The tract at residues 435–474 (VKEKTTKTSKATKTSKTTKATKTASKTTKTTKTQNKKEKK) is disordered. Residues 442 to 467 (TSKATKTSKTTKATKTASKTTKTTKT) are compositionally biased toward low complexity.

Belongs to the FKBP-type PPIase family. Tig subfamily.

The protein localises to the cytoplasm. It catalyses the reaction [protein]-peptidylproline (omega=180) = [protein]-peptidylproline (omega=0). In terms of biological role, involved in protein export. Acts as a chaperone by maintaining the newly synthesized protein in an open conformation. Functions as a peptidyl-prolyl cis-trans isomerase. The sequence is that of Trigger factor from Prochlorococcus marinus (strain AS9601).